The primary structure comprises 362 residues: Protein BIG GRAIN 1-like D (362 aa).

3 disordered regions span residues 22-113 (IDPK…TLFH), 132-168 (KFNR…GGRI), and 303-327 (VKTN…ASDS). Positions 23–47 (DPKTQKTQPYVGSVNTTTKKQSIVT) are enriched in polar residues. Residues 50–60 (VPDRKIHRDRF) are compositionally biased toward basic and acidic residues. The span at 63-78 (SVSSSSDSNSSIFSSS) shows a compositional bias: low complexity. Residues 132–144 (KFNRHDENWENTR) show a composition bias toward basic and acidic residues. A compositionally biased stretch (acidic residues) spans 309–324 (EDYEDDDEDDDDDDVA).

Belongs to the BIG GRAIN 1 (BG1) plant protein family.

The protein resides in the cell membrane. Involved in auxin transport. Regulator of the auxin signaling pathway. This chain is Protein BIG GRAIN 1-like D, found in Arabidopsis thaliana (Mouse-ear cress).